Here is a 298-residue protein sequence, read N- to C-terminus: MNWITNYVRPRINSMLGRRPEVPENLWIKCPETGEMVFHKDLEDNKWVIPASGYHMKMPAKARLADLFDGGIYEALAQPKVAQDPLKFRDSKKYTDRLRDSRAKTEQEDTILAGVGLLKGLKIVAVVHEFQFMAGSLGIAAGEAIVKAFERAISERCPLVMFPASGGARMQEGILSLMQLPRTTVAVNMLKEAGMPYIVVLTNPTTGGVTASYAMLGDVHIAEPGAEICFAGKRVIEQTIREKLPEGFQTSEYLLEHGMVDMVIDRREIPDTLASMLKIMTKAPADNANAVVPLAASA.

The region spanning 26–295 (LWIKCPETGE…DNANAVVPLA (270 aa)) is the CoA carboxyltransferase N-terminal domain.

It belongs to the AccD/PCCB family. In terms of assembly, acetyl-CoA carboxylase is a heterohexamer composed of biotin carboxyl carrier protein (AccB), biotin carboxylase (AccC) and two subunits each of ACCase subunit alpha (AccA) and ACCase subunit beta (AccD).

The protein resides in the cytoplasm. The catalysed reaction is N(6)-carboxybiotinyl-L-lysyl-[protein] + acetyl-CoA = N(6)-biotinyl-L-lysyl-[protein] + malonyl-CoA. Its pathway is lipid metabolism; malonyl-CoA biosynthesis; malonyl-CoA from acetyl-CoA: step 1/1. Component of the acetyl coenzyme A carboxylase (ACC) complex. Biotin carboxylase (BC) catalyzes the carboxylation of biotin on its carrier protein (BCCP) and then the CO(2) group is transferred by the transcarboxylase to acetyl-CoA to form malonyl-CoA. The protein is Acetyl-coenzyme A carboxylase carboxyl transferase subunit beta of Agrobacterium fabrum (strain C58 / ATCC 33970) (Agrobacterium tumefaciens (strain C58)).